The primary structure comprises 409 residues: Terpredoxin reductase (409 aa).

7 to 38 (TTVIVGAGHAGTAAAFFLREFGYHGRVLLLSA) provides a ligand contact to FAD. 151-159 (GGGFIGLEI) is an NAD(+) binding site.

The cofactor is FAD.

The oxidation of alpha-terpineol by cytochrome p450-TERP requires the participation of a flavoprotein, terpredoxin reductase, and an iron-sulfur protein, terpredoxin, to mediate the transfer of electrons from NADH to P450 for oxygen activation. This Pseudomonas sp protein is Terpredoxin reductase (terPA).